Here is a 127-residue protein sequence, read N- to C-terminus: Fluoride-specific ion channel FluC (127 aa).

4 helical membrane passes run 4 to 24, 35 to 55, 71 to 91, and 103 to 123; these read LLLA…MLSM, IGTL…FAWF, TGFC…VFLL, and VLIN…LFSA. Residues glycine 75 and threonine 78 each coordinate Na(+).

The protein belongs to the fluoride channel Fluc/FEX (TC 1.A.43) family.

The protein localises to the cell inner membrane. The enzyme catalyses fluoride(in) = fluoride(out). With respect to regulation, na(+) is not transported, but it plays an essential structural role and its presence is essential for fluoride channel function. In terms of biological role, fluoride-specific ion channel. Important for reducing fluoride concentration in the cell, thus reducing its toxicity. In Salmonella agona (strain SL483), this protein is Fluoride-specific ion channel FluC.